We begin with the raw amino-acid sequence, 1133 residues long: Early transcription factor large subunit homolog (1133 aa).

The Helicase ATP-binding domain occupies 52 to 352; it reads KGGRAFFPCD…PNGQPLQRQQ (301 aa). 99–106 contacts ATP; it reads WQTGTGKS. The DEAH box signature appears at 281–284; sequence DEIH. In terms of domain architecture, Helicase C-terminal spans 524-724; the sequence is MMKDILSIIR…EGDKALRKHA (201 aa).

The protein belongs to the DEAD box helicase family. DEAH subfamily.

Its subcellular location is the virion. The enzyme catalyses ATP + H2O = ADP + phosphate + H(+). Its function is as follows. Putative initation factor. This is Early transcription factor large subunit homolog from African swine fever virus (isolate Tick/South Africa/Pretoriuskop Pr4/1996) (ASFV).